The primary structure comprises 318 residues: tRNA U34 carboxymethyltransferase (318 aa).

Carboxy-S-adenosyl-L-methionine-binding positions include lysine 88, tryptophan 102, lysine 107, glycine 126, 176–177 (LE), methionine 192, tyrosine 196, and arginine 311.

Belongs to the class I-like SAM-binding methyltransferase superfamily. CmoB family. Homotetramer.

The catalysed reaction is carboxy-S-adenosyl-L-methionine + 5-hydroxyuridine(34) in tRNA = 5-carboxymethoxyuridine(34) in tRNA + S-adenosyl-L-homocysteine + H(+). Functionally, catalyzes carboxymethyl transfer from carboxy-S-adenosyl-L-methionine (Cx-SAM) to 5-hydroxyuridine (ho5U) to form 5-carboxymethoxyuridine (cmo5U) at position 34 in tRNAs. This is tRNA U34 carboxymethyltransferase from Pseudomonas putida (strain GB-1).